The primary structure comprises 262 residues: Short-chain Z-isoprenyl diphosphate synthase (262 aa).

Residue aspartate 40 is part of the active site. Position 40 (aspartate 40) interacts with Mg(2+). Residues 41–44, tryptophan 45, and 86–88 each bind substrate; these read GNRR and STE. The Proton acceptor role is filled by asparagine 89. Residues arginine 92, arginine 211, and 217–219 contribute to the substrate site; that span reads RLS. Glutamate 230 contributes to the Mg(2+) binding site.

This sequence belongs to the UPP synthase family. Z-FPP synthase subfamily. It depends on Mg(2+) as a cofactor.

The catalysed reaction is isopentenyl diphosphate + (2E)-geranyl diphosphate = (2Z,6E)-farnesyl diphosphate + diphosphate. The protein operates within phospholipid metabolism; decaprenyl phosphate biosynthesis. Its function is as follows. Generates Z-farnesyl diphosphate (Z-FPP) from isopentenyl pyrophosphate (IPP). Z-FPP is the precursor of decaprenyl diphosphate, which has a central role in the biosynthesis of the mycobacterial cell wall. This chain is Short-chain Z-isoprenyl diphosphate synthase, found in Mycobacterium leprae (strain TN).